A 105-amino-acid polypeptide reads, in one-letter code: Small ribosomal subunit protein uS10 (105 aa).

It belongs to the universal ribosomal protein uS10 family. Part of the 30S ribosomal subunit.

Involved in the binding of tRNA to the ribosomes. This Rickettsia rickettsii (strain Iowa) protein is Small ribosomal subunit protein uS10.